Reading from the N-terminus, the 1249-residue chain is MAGE-like protein 2 (1249 aa).

Over residues 1–10 (MSQLSKNLGD) the composition is skewed to polar residues. Disordered stretches follow at residues 1-50 (MSQL…PPID), 134-233 (APGA…AQPP), 300-327 (QPPA…QPMA), 349-378 (PQVP…WQAT), 410-433 (RQGP…VRQA), 515-569 (QALP…LPAP), 647-679 (QPFQ…EVPT), 714-746 (LMTP…RAPS), 862-910 (PQAT…DWQG), and 930-957 (VSGD…ILSG). 2 stretches are compositionally biased toward pro residues: residues 40-49 (PPVPWDPPPI) and 140-233 (AHPP…AQPP). A compositionally biased stretch (low complexity) spans 301–311 (PPASGAPMAQP). Pro residues-rich tracts occupy residues 312-324 (AAPP…PPAQ) and 349-358 (PQVPQGPQAP). Polar residues predominate over residues 369-378 (QATSPGWQAT). The segment covering 410–432 (RQGPPPIRPGPPPIRPGPPPVRQ) has biased composition (pro residues). Residues 525-552 (QAPQARLPAPQVQAAPQVPTAPPATQVP) show a composition bias toward low complexity. Residues 553 to 567 (AAPPAGPQVPQPVLP) show a composition bias toward pro residues. A compositionally biased stretch (low complexity) spans 662-675 (QLPPQQAQASGPQA). Over residues 725–746 (SIDRRGSSKERRTSSKERRAPS) the composition is skewed to basic and acidic residues. The span at 862 to 871 (PQATATTQEA) shows a compositional bias: low complexity. Positions 881–891 (RSGKATRKKKH) are enriched in basic residues. The 200-residue stretch at 1020–1219 (LDERANALVQ…QSWPFHYLEA (200 aa)) folds into the MAGE domain. The segment covering 1226 to 1235 (EDTDEDEPDT) has biased composition (acidic residues). The disordered stretch occupies residues 1226–1249 (EDTDEDEPDTGDSAHGPTSRPPPR).

In terms of assembly, part of a complex consisting of MAGEL2, TRIM27 and USP7; directly interacts with USP7. Interacts with TRIM27. Interacts with VPS35; leading to recruitment at retromer-containing endosomes. Interacts with BMAL1 and PER2. Expressed in placenta, fetal and adult brain. Not detected in heart and small intestine, very low levels in fibroblasts. Not expressed in brain of a Prader-Willi patient.

The protein localises to the early endosome. The protein resides in the cytoplasm. It localises to the nucleus. Its function is as follows. Probably enhances ubiquitin ligase activity of RING-type zinc finger-containing E3 ubiquitin-protein ligases, possibly through recruitment and/or stabilization of the Ubl-conjugating enzyme (E2) at the E3:substrate complex. Acts as a regulator of retrograde transport via its interaction with VPS35. Recruited to retromer-containing endosomes and promotes the formation of 'Lys-63'-linked polyubiquitin chains at 'Lys-220' of WASHC1 together with TRIM27, leading to promote endosomal F-actin assembly. Regulates the circadian clock by repressing the transcriptional activator activity of the CLOCK-BMAL1 heterodimer. Significantly promotes the cytoplasmic accumulation of CLOCK. The polypeptide is MAGE-like protein 2 (MAGEL2) (Homo sapiens (Human)).